Here is a 74-residue protein sequence, read N- to C-terminus: MKNSINIQDQFLNQLRKDGTQVTVFLLNGYQLKGYIKGFDNFTVLLEVQGKQQLIYKHAISTFAPEKNVRFETE.

A Sm domain is found at 9-69; sequence DQFLNQLRKD…ISTFAPEKNV (61 aa).

Belongs to the Hfq family. In terms of assembly, homohexamer.

Functionally, RNA chaperone that binds small regulatory RNA (sRNAs) and mRNAs to facilitate mRNA translational regulation in response to envelope stress, environmental stress and changes in metabolite concentrations. Also binds with high specificity to tRNAs. The protein is RNA-binding protein Hfq of Geobacillus sp. (strain WCH70).